A 365-amino-acid polypeptide reads, in one-letter code: Chorismate synthase (365 aa).

R46 contacts NADP(+). FMN contacts are provided by residues 123–125, 241–242, G281, 296–300, and R322; these read RSS, NG, and KPTPS.

Belongs to the chorismate synthase family. In terms of assembly, homotetramer. FMNH2 is required as a cofactor.

It carries out the reaction 5-O-(1-carboxyvinyl)-3-phosphoshikimate = chorismate + phosphate. It functions in the pathway metabolic intermediate biosynthesis; chorismate biosynthesis; chorismate from D-erythrose 4-phosphate and phosphoenolpyruvate: step 7/7. In terms of biological role, catalyzes the anti-1,4-elimination of the C-3 phosphate and the C-6 proR hydrogen from 5-enolpyruvylshikimate-3-phosphate (EPSP) to yield chorismate, which is the branch point compound that serves as the starting substrate for the three terminal pathways of aromatic amino acid biosynthesis. This reaction introduces a second double bond into the aromatic ring system. The chain is Chorismate synthase from Helicobacter pylori (strain J99 / ATCC 700824) (Campylobacter pylori J99).